Reading from the N-terminus, the 465-residue chain is Cytochrome P450 85A2 (465 aa).

The chain crosses the membrane as a helical span at residues 2–22 (GIMMMILGLLVIIVCLCTALL). Cysteine 415 lines the heme pocket. A lipid anchor (S-farnesyl cysteine) is attached at cysteine 462. The Farnesylation CAAX motif motif lies at 462–465 (CSPY).

Belongs to the cytochrome P450 family. Requires heme as cofactor. Post-translationally, isoprenylated (farnesylated); this addition of a 15-carbon farnesyl isoprenoid to the carboxy terminus is required for endoplasmic reticulum localization and essential for the biosynthesis of brassinolide. Expressed in stems, hypocotyls, leaves, siliques, shoots, and roots, with a higher expression in apical shoots.

It localises to the membrane. It is found in the endoplasmic reticulum. It catalyses the reaction 6-deoxoteasterone + reduced [NADPH--hemoprotein reductase] + O2 = 6alpha-hydroxyteasterone + oxidized [NADPH--hemoprotein reductase] + H2O + H(+). The enzyme catalyses 6alpha-hydroxytyphasterol + reduced [NADPH--hemoprotein reductase] + O2 = teasterone + oxidized [NADPH--hemoprotein reductase] + 2 H2O + H(+). It carries out the reaction 3-dehydro-6-deoxoteasterone + reduced [NADPH--hemoprotein reductase] + O2 = 3-dehydro-6alpha-hydroxyteasterone + oxidized [NADPH--hemoprotein reductase] + H2O + H(+). The catalysed reaction is 3-dehydro-6alpha-hydroxyteasterone + reduced [NADPH--hemoprotein reductase] + O2 = 3-dehydroteasterone + oxidized [NADPH--hemoprotein reductase] + 2 H2O + H(+). It catalyses the reaction 6-deoxotyphasterol + reduced [NADPH--hemoprotein reductase] + O2 = 6alpha-hydroxytyphasterol + oxidized [NADPH--hemoprotein reductase] + H2O + H(+). The enzyme catalyses 6alpha-hydroxytyphasterol + reduced [NADPH--hemoprotein reductase] + O2 = typhasterol + oxidized [NADPH--hemoprotein reductase] + 2 H2O + H(+). It carries out the reaction 6-deoxocastasterone + reduced [NADPH--hemoprotein reductase] + O2 = 6alpha-hydroxycastasterone + oxidized [NADPH--hemoprotein reductase] + H2O + H(+). The catalysed reaction is 6alpha-hydroxycastasterone + reduced [NADPH--hemoprotein reductase] + O2 = castasterone + oxidized [NADPH--hemoprotein reductase] + 2 H2O + H(+). It catalyses the reaction 6-deoxo-28-norteasterone + 2 reduced [NADPH--hemoprotein reductase] + 2 O2 = 28-norteasterone + 2 oxidized [NADPH--hemoprotein reductase] + 3 H2O + 2 H(+). The enzyme catalyses 6-deoxo-28-norteasterone + reduced [NADPH--hemoprotein reductase] + O2 = 6alpha-hydroxy-28-norteasterone + oxidized [NADPH--hemoprotein reductase] + H2O + H(+). It carries out the reaction 6alpha-hydroxy-28-norteasterone + reduced [NADPH--hemoprotein reductase] + O2 = 28-norteasterone + oxidized [NADPH--hemoprotein reductase] + 2 H2O + H(+). The catalysed reaction is 6-deoxo-28-nortyphasterol + 2 reduced [NADPH--hemoprotein reductase] + 2 O2 = 28-nortyphasterol + 2 oxidized [NADPH--hemoprotein reductase] + 3 H2O + 2 H(+). It catalyses the reaction 6-deoxo-28-nortyphasterol + reduced [NADPH--hemoprotein reductase] + O2 = 6alpha-hydroxy-28-nortyphasterol + oxidized [NADPH--hemoprotein reductase] + H2O + H(+). The enzyme catalyses 6alpha-hydroxy-28-nortyphasterol + reduced [NADPH--hemoprotein reductase] + O2 = 28-nortyphasterol + oxidized [NADPH--hemoprotein reductase] + 2 H2O + H(+). It carries out the reaction 6-deoxo-28-norcastasterone + 2 reduced [NADPH--hemoprotein reductase] + 2 O2 = 28-norcastasterone + 2 oxidized [NADPH--hemoprotein reductase] + 3 H2O + 2 H(+). The catalysed reaction is 6-deoxo-28-norcastasterone + reduced [NADPH--hemoprotein reductase] + O2 = 6alpha-hydroxy-28-norcastasterone + oxidized [NADPH--hemoprotein reductase] + H2O + H(+). It catalyses the reaction 6alpha-hydroxy-28-norcastasterone + reduced [NADPH--hemoprotein reductase] + O2 = 28-norcastasterone + oxidized [NADPH--hemoprotein reductase] + 2 H2O + H(+). The enzyme catalyses 3-dehydro-6-deoxo-28-norteasterone + 2 reduced [NADPH--hemoprotein reductase] + 2 O2 = 6-dehydro-28-norteasterone + 2 oxidized [NADPH--hemoprotein reductase] + 3 H2O + 2 H(+). It carries out the reaction 3-dehydro-6-deoxo-28-norteasterone + reduced [NADPH--hemoprotein reductase] + O2 = 3-dehydro-6alpha-hydroxy-28-norteasterone + oxidized [NADPH--hemoprotein reductase] + H2O + H(+). The catalysed reaction is 3-dehydro-6alpha-hydroxy-28-norteasterone + reduced [NADPH--hemoprotein reductase] + O2 = 6-dehydro-28-norteasterone + oxidized [NADPH--hemoprotein reductase] + 2 H2O + H(+). It catalyses the reaction teasterone + reduced [NADPH--hemoprotein reductase] + O2 = 7-oxateasterone + oxidized [NADPH--hemoprotein reductase] + H2O + H(+). The enzyme catalyses castasterone + reduced [NADPH--hemoprotein reductase] + O2 = brassinolide + oxidized [NADPH--hemoprotein reductase] + H2O + H(+). It carries out the reaction typhasterol + reduced [NADPH--hemoprotein reductase] + O2 = 7-oxatyphasterol + oxidized [NADPH--hemoprotein reductase] + H2O + H(+). The catalysed reaction is 6-deoxocastasterone + 2 reduced [NADPH--hemoprotein reductase] + 2 O2 = castasterone + 2 oxidized [NADPH--hemoprotein reductase] + 3 H2O + 2 H(+). It catalyses the reaction 6-deoxoteasterone + 2 reduced [NADPH--hemoprotein reductase] + 2 O2 = teasterone + 2 oxidized [NADPH--hemoprotein reductase] + 3 H2O + 2 H(+). The enzyme catalyses 6-deoxotyphasterol + 2 reduced [NADPH--hemoprotein reductase] + 2 O2 = typhasterol + 2 oxidized [NADPH--hemoprotein reductase] + 3 H2O + 2 H(+). It carries out the reaction 3-dehydro-6-deoxoteasterone + 2 reduced [NADPH--hemoprotein reductase] + 2 O2 = 3-dehydroteasterone + 2 oxidized [NADPH--hemoprotein reductase] + 3 H2O + 2 H(+). The protein operates within plant hormone biosynthesis; brassinosteroid biosynthesis. Mediates Baeyer-Villiger oxidation and catalyzes the C6-oxidation step and lactonization in brassinosteroids biosynthesis. Converts 6-deoxocastasterone (6-deoxoCS) to castasterone (CS), and castasterone to brassinolide (BL). May also convert 6-deoxoteasterone (6-deoxoTE) to teasterone (TE), 3-dehydro-6-deoxoteasterone (6-deoxo3DT, 6-deoxo-3-DHT) to 3-dehydroteasterone (3DT, 3-DHT), and 6-deoxotyphasterol (6-deoxoTY) to typhasterol (TY). Also seems to be able to convert teasterone (TE) and typhasterol (TY) to 7-oxateasterone (7-OXTE) and 7-oxatyphasterol (7-OXTY), respectively. Catalyzes the conversion of 6-deoxo-28-norteasterone (6-deoxo-28-norTE) to 28-norteasterone (28-norTE), 6-deoxo-28-nordeoxoteasterone (6-deoxo-28-nor-3-DHT) to 28-nordeoxoteasterone (28-nor-3-DHT), 6-deoxo-28-nortyphasterol (6-deoxo-28-norTY) to 28-nortyphasterol (28-norTY) and 6-deoxo-28-norcastasterone (6-deoxo-28-norCS) to 28-norcastasterone (28-norCS). Involved in a negative regulation of responses to abscisic acid (ABA) and drought tolerance. The sequence is that of Cytochrome P450 85A2 (CYP85A2) from Arabidopsis thaliana (Mouse-ear cress).